Reading from the N-terminus, the 75-residue chain is UPF0352 protein YejL (75 aa).

Belongs to the UPF0352 family.

The sequence is that of UPF0352 protein YejL from Shigella sonnei (strain Ss046).